Consider the following 77-residue polypeptide: U10-lycotoxin-Ls1a (77 aa).

A signal peptide spans 1-20; sequence MKLIIFTGLVLFAIVSLIEA. Residues 21-26 constitute a propeptide that is removed on maturation; sequence EEESGR.

This sequence belongs to the neurotoxin 19 (CSTX) family. 09 (U10-Lctx) subfamily. Post-translationally, contains 4 disulfide bonds. As to expression, expressed by the venom gland.

The protein resides in the secreted. This is U10-lycotoxin-Ls1a from Lycosa singoriensis (Wolf spider).